The following is a 522-amino-acid chain: Protein tweety homolog 3 (522 aa).

The Extracellular segment spans residues 1 to 43; the sequence is MAAAISYTPPWWVNLLHRLPHLNLQWESLNGDFRPEDPDYQQS. Residues 44-64 traverse the membrane as a helical segment; the sequence is LMLLACVALSCLALDLLFLLF. Over 65–87 the chain is Cytoplasmic; sequence YSFWFCCRHRKTEENTNADCCCT. A helical transmembrane segment spans residues 88-108; sequence VWCVIVATLVCSAGIAVGFYG. Residues 109 to 211 lie on the Extracellular side of the membrane; the sequence is NGETSDGIHR…VDLFDWYRWL (103 aa). Ca(2+) contacts are provided by E111 and D114. N-linked (GlcNAc...) asparagine glycans are attached at residues N127 and N145. The helical transmembrane segment at 212 to 232 threads the bilayer; that stretch reads GYLGLLLFHVFICLLVLFGLI. Topologically, residues 233–238 are cytoplasmic; it reads RNSKGT. The helical transmembrane segment at 239 to 259 threads the bilayer; sequence LICVCFLGMMALIISWASMGL. At 260–386 the chain is on the extracellular side; that stretch reads ELAVAVGSSD…LTGFCYDGVE (127 aa). 2 cysteine pairs are disulfide-bonded: C271/C381 and C299/C366. N351 is a glycosylation site (N-linked (GlcNAc...) asparagine). A helical membrane pass occupies residues 387–407; that stretch reads GLIYLVLFSFVTALMFSSIVC. At 408–522 the chain is on the cytoplasmic side; that stretch reads SVPHTWQQRR…TNRPETDPVH (115 aa). The tract at residues 483 to 522 is disordered; the sequence is QNPRCENTPLIGRESPPPSYTSSMRAKYLATNRPETDPVH.

The protein belongs to the tweety family. In terms of assembly, homotetramer; disulfide-linked. Forms cis-homodimers in the presence of Ca(2+).

Its subcellular location is the cell membrane. The enzyme catalyses chloride(in) = chloride(out). It carries out the reaction L-glutamate(out) = L-glutamate(in). May act as a calcium-independent, swelling-dependent volume-regulated anion channel (VRAC-swell) which plays a pivotal role in the process of regulatory volume decrease (RVD) in the brain through the efflux of anions like chloride and organic osmolytes like glutamate. Probable large-conductance Ca(2+)-activated chloride channel. This chain is Protein tweety homolog 3 (ttyh3), found in Xenopus laevis (African clawed frog).